The chain runs to 264 residues: Chanoclavine-I dehydrogenase easD (264 aa).

Residues 1 to 20 form the signal peptide; it reads MASVSSKIFAITGGASGIGA. 6 residues coordinate NADP(+): Ile18, Asp66, Arg132, Tyr169, Lys173, and Thr204. Catalysis depends on Tyr169, which acts as the Proton donor. The Lowers pKa of active site Tyr role is filled by Lys173.

Belongs to the short-chain dehydrogenases/reductases (SDR) family. In terms of assembly, homotetramer.

It catalyses the reaction chanoclavine-I + NAD(+) = chanoclavine-I aldehyde + NADH + H(+). The protein operates within alkaloid biosynthesis; ergot alkaloid biosynthesis. Chanoclavine-I dehydrogenase; part of the gene cluster that mediates the biosynthesis of fungal ergot alkaloid. DmaW catalyzes the first step of ergot alkaloid biosynthesis by condensing dimethylallyl diphosphate (DMAP) and tryptophan to form 4-dimethylallyl-L-tryptophan. The second step is catalyzed by the methyltransferase easF that methylates 4-dimethylallyl-L-tryptophan in the presence of S-adenosyl-L-methionine, resulting in the formation of 4-dimethylallyl-L-abrine. The catalase easC and the FAD-dependent oxidoreductase easE then transform 4-dimethylallyl-L-abrine to chanoclavine-I which is further oxidized by easD in the presence of NAD(+), resulting in the formation of chanoclavine-I aldehyde. Chanoclavine-I aldehyde is the precursor of ergoamides and ergopeptines in Clavicipitaceae, and clavine-type alcaloids such as fumiclavine in Trichocomaceae. However, the metabolites downstream of chanoclavine-I aldehyde in Arthrodermataceae have not been identified yet. The chain is Chanoclavine-I dehydrogenase easD from Arthroderma otae (strain ATCC MYA-4605 / CBS 113480) (Microsporum canis).